The primary structure comprises 263 residues: 3-methyl-2-oxobutanoate hydroxymethyltransferase (263 aa).

2 residues coordinate Mg(2+): D45 and D84. 3-methyl-2-oxobutanoate is bound by residues 45 to 46 (DS), D84, and K112. Residue E114 coordinates Mg(2+). The Proton acceptor role is filled by E180.

It belongs to the PanB family. As to quaternary structure, homodecamer; pentamer of dimers. It depends on Mg(2+) as a cofactor.

It is found in the cytoplasm. The catalysed reaction is 3-methyl-2-oxobutanoate + (6R)-5,10-methylene-5,6,7,8-tetrahydrofolate + H2O = 2-dehydropantoate + (6S)-5,6,7,8-tetrahydrofolate. It functions in the pathway cofactor biosynthesis; (R)-pantothenate biosynthesis; (R)-pantoate from 3-methyl-2-oxobutanoate: step 1/2. Functionally, catalyzes the reversible reaction in which hydroxymethyl group from 5,10-methylenetetrahydrofolate is transferred onto alpha-ketoisovalerate to form ketopantoate. This Citrobacter koseri (strain ATCC BAA-895 / CDC 4225-83 / SGSC4696) protein is 3-methyl-2-oxobutanoate hydroxymethyltransferase.